The sequence spans 291 residues: MYSTATQSSPSLAGVKNIVLVLSGKGGVGKSSVTTQLALTLAAQGKKVGVLDIDLTGPSIPRFFGMEDKQVYQSSAGWVPVYTDASRNLCLMSLGFLLSSRGDSVVWRGPRKTAMIRQFIRDVVWGELDYLLIDTPPGTSDEHISIAEELRFCDQILGAVIVTTPQGVALADVRKELSFCKKIGFPILGIIENMSGYVCPHCSECQNIFSKGGGENLAKQYECKFLGTVPIDPKFVLMVENAKGGLQEIYGETDMAKIFAGICDKAFSEENEEEAKETAEEEKSRAATNGQ.

ATP is bound at residue 24 to 31 (GKGGVGKS). Positions 199 and 202 each coordinate [4Fe-4S] cluster. The disordered stretch occupies residues 270–291 (ENEEEAKETAEEEKSRAATNGQ). A compositionally biased stretch (basic and acidic residues) spans 276-285 (KETAEEEKSR).

The protein belongs to the Mrp/NBP35 ATP-binding proteins family. NUBP2/CFD1 subfamily. As to quaternary structure, heterotetramer of 2 NBP35 and 2 CFD1 chains. The cofactor is [4Fe-4S] cluster.

The protein resides in the cytoplasm. Its function is as follows. Component of the cytosolic iron-sulfur (Fe/S) protein assembly (CIA) machinery. Required for maturation of extramitochondrial Fe-S proteins. The NBP35-CFD1 heterotetramer forms a Fe-S scaffold complex, mediating the de novo assembly of an Fe-S cluster and its transfer to target apoproteins. Required for biogenesis and export of both ribosomal subunits, which may reflect a role in assembly of the Fe/S clusters in RLI1, a protein which performs rRNA processing and ribosome export. The chain is Cytosolic Fe-S cluster assembly factor CFD1 from Yarrowia lipolytica (strain CLIB 122 / E 150) (Yeast).